A 518-amino-acid chain; its full sequence is Probable malate:quinone oxidoreductase (518 aa).

The interval 495 to 518 (GAIPATTDGQSTAGTEHTPTAATV) is disordered. A compositionally biased stretch (polar residues) spans 501-518 (TDGQSTAGTEHTPTAATV).

The protein belongs to the MQO family. FAD is required as a cofactor.

It carries out the reaction (S)-malate + a quinone = a quinol + oxaloacetate. It participates in carbohydrate metabolism; tricarboxylic acid cycle; oxaloacetate from (S)-malate (quinone route): step 1/1. This chain is Probable malate:quinone oxidoreductase, found in Mycolicibacterium gilvum (strain PYR-GCK) (Mycobacterium gilvum (strain PYR-GCK)).